Consider the following 101-residue polypeptide: Small ribosomal subunit protein uS14 (101 aa).

This sequence belongs to the universal ribosomal protein uS14 family. Part of the 30S ribosomal subunit. Contacts proteins S3 and S10.

In terms of biological role, binds 16S rRNA, required for the assembly of 30S particles and may also be responsible for determining the conformation of the 16S rRNA at the A site. This chain is Small ribosomal subunit protein uS14, found in Psychromonas ingrahamii (strain DSM 17664 / CCUG 51855 / 37).